Consider the following 297-residue polypeptide: E3 ubiquitin-protein ligase RNF212B (297 aa).

An RING-type zinc finger spans residues 6–40 (CNQCFRKDGAHFFVTSCGHIFCKKCMTLEKCAVCG). Residues 87–136 (LLIAFYKDRITKLEAAVKEAQEMAASQNKELSALRKENGELKKILDILKG) adopt a coiled-coil conformation. 2 disordered regions span residues 152–179 (VGITSPSQSVAPRPSSHHSSQVVSRSSS) and 198–269 (RGLH…ESLP). The span at 163–179 (PRPSSHHSSQVVSRSSS) shows a compositional bias: low complexity. The segment covering 206-234 (PGDSYTETPSPASTHSLSYRPSSASSGQG) has biased composition (polar residues).

In terms of assembly, homodimer. Post-translationally, autoubiquitinated.

The protein resides in the chromosome. It catalyses the reaction S-ubiquitinyl-[E2 ubiquitin-conjugating enzyme]-L-cysteine + [acceptor protein]-L-lysine = [E2 ubiquitin-conjugating enzyme]-L-cysteine + N(6)-ubiquitinyl-[acceptor protein]-L-lysine.. It functions in the pathway protein modification; protein ubiquitination. Ubiquitin E3 ligase that acts as a crucial factor for crossing-over (CO) formation during meiosis. Essential for normal prophase I progression and for ensuring appropriate CO designation in meiosis. Recruits key components of the cross-over machinery either directly ou indirectly, leading to the activation of the MutL-gamma complex. The function of RNF212B in CO designation is dependent on its catalytic activity. The polypeptide is E3 ubiquitin-protein ligase RNF212B (Rnf212b) (Mus musculus (Mouse)).